A 120-amino-acid chain; its full sequence is ATP-dependent Clp protease adapter protein ClpS (120 aa).

Belongs to the ClpS family. In terms of assembly, binds to the N-terminal domain of the chaperone ClpA.

In terms of biological role, involved in the modulation of the specificity of the ClpAP-mediated ATP-dependent protein degradation. The polypeptide is ATP-dependent Clp protease adapter protein ClpS (Azotobacter vinelandii (strain DJ / ATCC BAA-1303)).